The following is a 477-amino-acid chain: Glycogen synthase (477 aa).

Lys15 contributes to the ADP-alpha-D-glucose binding site.

Belongs to the glycosyltransferase 1 family. Bacterial/plant glycogen synthase subfamily.

It carries out the reaction [(1-&gt;4)-alpha-D-glucosyl](n) + ADP-alpha-D-glucose = [(1-&gt;4)-alpha-D-glucosyl](n+1) + ADP + H(+). It functions in the pathway glycan biosynthesis; glycogen biosynthesis. In terms of biological role, synthesizes alpha-1,4-glucan chains using ADP-glucose. This Salmonella choleraesuis (strain SC-B67) protein is Glycogen synthase.